Here is a 396-residue protein sequence, read N- to C-terminus: Tryptophan synthase beta chain (396 aa).

Lys-96 is subject to N6-(pyridoxal phosphate)lysine.

Belongs to the TrpB family. In terms of assembly, tetramer of two alpha and two beta chains. The cofactor is pyridoxal 5'-phosphate.

The catalysed reaction is (1S,2R)-1-C-(indol-3-yl)glycerol 3-phosphate + L-serine = D-glyceraldehyde 3-phosphate + L-tryptophan + H2O. It functions in the pathway amino-acid biosynthesis; L-tryptophan biosynthesis; L-tryptophan from chorismate: step 5/5. Functionally, the beta subunit is responsible for the synthesis of L-tryptophan from indole and L-serine. This Azobacteroides pseudotrichonymphae genomovar. CFP2 protein is Tryptophan synthase beta chain.